The primary structure comprises 450 residues: UPF0236 protein in vanSb 3'region (450 aa).

This sequence belongs to the UPF0236 family.

The polypeptide is UPF0236 protein in vanSb 3'region (Streptococcus gallolyticus (Streptococcus bovis biotype I)).